Here is a 781-residue protein sequence, read N- to C-terminus: Zinc finger protein klf1 (781 aa).

2 consecutive C2H2-type zinc fingers follow at residues Tyr-17–His-41 and Phe-47–His-70.

The protein resides in the nucleus. It localises to the cytoplasm. The protein localises to the cytoskeleton. Its subcellular location is the spindle. Required for maintaining cell viability in nitrogen-deficient stationary phase (G0) cells. The polypeptide is Zinc finger protein klf1 (klf1) (Schizosaccharomyces pombe (strain 972 / ATCC 24843) (Fission yeast)).